Reading from the N-terminus, the 924-residue chain is Protein translocase subunit SecA (924 aa).

Residues Gln-87, 105–109 (GEGKT), and Asp-515 contribute to the ATP site. Residues Cys-908, Cys-910, Cys-919, and His-920 each coordinate Zn(2+).

Belongs to the SecA family. Monomer and homodimer. Part of the essential Sec protein translocation apparatus which comprises SecA, SecYEG and auxiliary proteins SecDF-YajC and YidC. Zn(2+) serves as cofactor.

The protein resides in the cell inner membrane. It is found in the cytoplasm. The catalysed reaction is ATP + H2O + cellular proteinSide 1 = ADP + phosphate + cellular proteinSide 2.. Part of the Sec protein translocase complex. Interacts with the SecYEG preprotein conducting channel. Has a central role in coupling the hydrolysis of ATP to the transfer of proteins into and across the cell membrane, serving both as a receptor for the preprotein-SecB complex and as an ATP-driven molecular motor driving the stepwise translocation of polypeptide chains across the membrane. This chain is Protein translocase subunit SecA, found in Cupriavidus pinatubonensis (strain JMP 134 / LMG 1197) (Cupriavidus necator (strain JMP 134)).